Here is a 346-residue protein sequence, read N- to C-terminus: Small ribosomal subunit biogenesis GTPase RsgA (346 aa).

Positions 98-261 (VQGGRGPQLA…VIDTPGMRTL (164 aa)) constitute a CP-type G domain. GTP-binding positions include 148 to 151 (TKAD) and 200 to 208 (GSSGVGKST). Zn(2+) contacts are provided by Cys-284, Cys-289, His-291, and Cys-297. A disordered region spans residues 317 to 346 (RKLSDENQHNTPVQSGPRGAKSPAGRGKRR).

The protein belongs to the TRAFAC class YlqF/YawG GTPase family. RsgA subfamily. Monomer. Associates with 30S ribosomal subunit, binds 16S rRNA. Zn(2+) serves as cofactor.

It is found in the cytoplasm. Functionally, one of several proteins that assist in the late maturation steps of the functional core of the 30S ribosomal subunit. Helps release RbfA from mature subunits. May play a role in the assembly of ribosomal proteins into the subunit. Circularly permuted GTPase that catalyzes slow GTP hydrolysis, GTPase activity is stimulated by the 30S ribosomal subunit. This chain is Small ribosomal subunit biogenesis GTPase RsgA, found in Mesorhizobium japonicum (strain LMG 29417 / CECT 9101 / MAFF 303099) (Mesorhizobium loti (strain MAFF 303099)).